An 814-amino-acid chain; its full sequence is DNA topoisomerase 1 (814 aa).

Positions 1–12 (MSSSDSDSVSLS) are enriched in low complexity. Positions 1-180 (MSSSDSDSVS…PNDEEDEDED (180 aa)) are disordered. Residues 13–22 (IRRRQRRGSS) show a composition bias toward basic residues. 3 positions are modified to phosphoserine: Ser52, Ser54, and Ser136. Thr138 bears the Phosphothreonine mark. Interaction with DNA regions lie at residues 404-405 (KY), 467-472 (RAGNEK), and 559-561 (SAK). The Topo IB-type catalytic domain maps to 411–814 (GSSLKGQSDL…AADTPPDWKW (404 aa)). The active-site O-(3'-phospho-DNA)-tyrosine intermediate is Tyr773.

Belongs to the type IB topoisomerase family. In terms of assembly, monomer.

The catalysed reaction is ATP-independent breakage of single-stranded DNA, followed by passage and rejoining.. Functionally, releases the supercoiling and torsional tension of DNA introduced during the DNA replication and transcription by transiently cleaving and rejoining one strand of the DNA duplex. Introduces a single-strand break via transesterification at a target site in duplex DNA. The scissile phosphodiester is attacked by the catalytic tyrosine of the enzyme, resulting in the formation of a DNA-(3'-phosphotyrosyl)-enzyme intermediate and the expulsion of a 5'-OH DNA strand. TThe free DNA strand then rotates around the intact phosphodiester bond on the opposing strand, thus removing DNA supercoils. Finally, in the religation step, the DNA 5'-OH attacks the covalent intermediate to expel the active-site tyrosine and restore the DNA phosphodiester backbone. The sequence is that of DNA topoisomerase 1 (top1) from Schizosaccharomyces pombe (strain 972 / ATCC 24843) (Fission yeast).